The sequence spans 305 residues: UDP-3-O-acyl-N-acetylglucosamine deacetylase (305 aa).

Zn(2+) contacts are provided by His-78, His-237, and Asp-241. His-264 (proton donor) is an active-site residue.

This sequence belongs to the LpxC family. Requires Zn(2+) as cofactor.

The enzyme catalyses a UDP-3-O-[(3R)-3-hydroxyacyl]-N-acetyl-alpha-D-glucosamine + H2O = a UDP-3-O-[(3R)-3-hydroxyacyl]-alpha-D-glucosamine + acetate. Its pathway is glycolipid biosynthesis; lipid IV(A) biosynthesis; lipid IV(A) from (3R)-3-hydroxytetradecanoyl-[acyl-carrier-protein] and UDP-N-acetyl-alpha-D-glucosamine: step 2/6. Its function is as follows. Catalyzes the hydrolysis of UDP-3-O-myristoyl-N-acetylglucosamine to form UDP-3-O-myristoylglucosamine and acetate, the committed step in lipid A biosynthesis. The protein is UDP-3-O-acyl-N-acetylglucosamine deacetylase of Burkholderia mallei (strain NCTC 10247).